The primary structure comprises 95 residues: Aspartyl/glutamyl-tRNA(Asn/Gln) amidotransferase subunit C (95 aa).

The protein belongs to the GatC family. As to quaternary structure, heterotrimer of A, B and C subunits.

It catalyses the reaction L-glutamyl-tRNA(Gln) + L-glutamine + ATP + H2O = L-glutaminyl-tRNA(Gln) + L-glutamate + ADP + phosphate + H(+). The enzyme catalyses L-aspartyl-tRNA(Asn) + L-glutamine + ATP + H2O = L-asparaginyl-tRNA(Asn) + L-glutamate + ADP + phosphate + 2 H(+). In terms of biological role, allows the formation of correctly charged Asn-tRNA(Asn) or Gln-tRNA(Gln) through the transamidation of misacylated Asp-tRNA(Asn) or Glu-tRNA(Gln) in organisms which lack either or both of asparaginyl-tRNA or glutaminyl-tRNA synthetases. The reaction takes place in the presence of glutamine and ATP through an activated phospho-Asp-tRNA(Asn) or phospho-Glu-tRNA(Gln). The chain is Aspartyl/glutamyl-tRNA(Asn/Gln) amidotransferase subunit C from Anaeromyxobacter sp. (strain Fw109-5).